We begin with the raw amino-acid sequence, 477 residues long: Delayed-rectifier potassium channel regulatory subunit KCNS2 (477 aa).

Residues 1–184 are Cytoplasmic-facing; it reads MTRQSLWDVS…LALDNPGYSV (184 aa). A helical transmembrane segment spans residues 185-206; that stretch reads LSRVFSVLSILVVLGSIITMCL. Topologically, residues 207-225 are extracellular; it reads NSLPDFQIPDSQGNPGEDP. The helical transmembrane segment at 226 to 248 threads the bilayer; sequence RFEIVEHFGIAWFTFELVARFAV. At 249–259 the chain is on the cytoplasmic side; it reads APDFLKFFKNA. Residues 260–280 traverse the membrane as a helical segment; sequence LNLIDLMSIVPFYITLVVNLV. Topologically, residues 281 to 290 are extracellular; it reads VESSPTLANL. The chain crosses the membrane as a helical; Voltage-sensor span at residues 291-311; the sequence is GRVAQVLRLMRIFRILKLARH. At 312–326 the chain is on the cytoplasmic side; the sequence is STGLRSLGATLKYSY. Residues 327 to 348 form a helical membrane-spanning segment; it reads KEVGLLLLYLSVGISIFSVVAY. Residues 349 to 361 are Extracellular-facing; it reads TIEKEENEGLATI. Residues 362–373 constitute an intramembrane region (helical); the sequence is PACWWWATVSMT. The short motif at 374 to 379 is the Selectivity filter element; sequence TVGYGD. The stretch at 374–381 is an intramembrane region; it reads TVGYGDVV. The Extracellular segment spans residues 382–388; it reads PGTTAGK. A helical membrane pass occupies residues 389-417; that stretch reads LTASACILAGILVVVLPITLIFNKFSHFY. Residues 418–477 lie on the Cytoplasmic side of the membrane; sequence RRQKQLESAMRSCDFGDGMKEVPSVNLRDYYAHKVKSLMASLTNMSRSSPSELSLDDSLH.

Belongs to the potassium channel family. S (TC 1.A.1.2) subfamily. Kv9.2/KCNS2 sub-subfamily. Heterotetramer with KCNB1 and KCNB2. Does not form homomultimers. In terms of tissue distribution, detected in brain, but not in the other tissues tested. Expression was highest in the olfactory bulb, cerebral cortex, hippocampus, habenula, basolateral amygdaloid nuclei and cerebellum.

The protein localises to the cell membrane. Functionally, potassium channel regulatory subunit that modulate the delayed rectifier voltage-gated potassium channel activity of KCNB1 and KCNB2 by altering their kinetics, expression levels, and shifting the half-inactivation potential to more polarized values. While it does not form functional channels on its own, it can form functional heterotetrameric channels with KCNB1 and KCNB2. Each regulatory subunit has unique regulatory properties that can lead to extensive inhibition, significant changes in kinetics, and/or substantial shifts in the voltage dependencies of the inactivation process. The polypeptide is Delayed-rectifier potassium channel regulatory subunit KCNS2 (Mus musculus (Mouse)).